The primary structure comprises 348 residues: uncharacterized protein (348 aa).

The segment at 132 to 348 is disordered; it reads SECRRSSDAL…QGTRRDSARL (217 aa). The span at 161 to 178 shows a compositional bias: low complexity; that stretch reads STAPIPNAAISSARSSAR. Over residues 192–207 the composition is skewed to polar residues; it reads SRSSSETRSPGGTVQP. The span at 227 to 273 shows a compositional bias: low complexity; the sequence is AAGSLLPAPRPPASSASSPQAAAPAAPSATRLPRRTTPSAPRPSSRP. Residues 274-287 show a composition bias toward pro residues; the sequence is ARPPIPAARPPPRR. Residues 288 to 310 show a composition bias toward low complexity; that stretch reads TPGTPRPAAARARAPAGCSPARR.

This is an uncharacterized protein from Streptomyces fradiae (Streptomyces roseoflavus).